A 325-amino-acid chain; its full sequence is Diaminopimelate epimerase (325 aa).

Asn11 and Asn69 together coordinate substrate. Cys78 (proton donor) is an active-site residue. Residues 79–80 (GN), Asn166, Asn203, and 221–222 (ER) each bind substrate. Cys230 functions as the Proton acceptor in the catalytic mechanism. Residue 231–232 (GT) coordinates substrate.

It belongs to the diaminopimelate epimerase family. Homodimer.

It is found in the cytoplasm. It catalyses the reaction (2S,6S)-2,6-diaminopimelate = meso-2,6-diaminopimelate. The protein operates within amino-acid biosynthesis; L-lysine biosynthesis via DAP pathway; DL-2,6-diaminopimelate from LL-2,6-diaminopimelate: step 1/1. In terms of biological role, catalyzes the stereoinversion of LL-2,6-diaminopimelate (L,L-DAP) to meso-diaminopimelate (meso-DAP), a precursor of L-lysine and an essential component of the bacterial peptidoglycan. The sequence is that of Diaminopimelate epimerase from Ligilactobacillus salivarius (strain UCC118) (Lactobacillus salivarius).